The following is a 129-amino-acid chain: Protein Turandot A2 (129 aa).

A signal peptide spans 1 to 21 (MNSSTSLMCFALLLISPLCMG). An N-linked (GlcNAc...) asparagine glycan is attached at Asn49.

It belongs to the Turandot family.

It localises to the secreted. In terms of biological role, a humoral factor that plays a role in stress tolerance; gives increased resistance to the lethal effects of bacterial challenge and stress. Regulated by the JAK/STAT pathway and NF-KB-like Relish pathway in the fat body, upd3 in the hemocytes and Mekk1 in response to septic injury and consequent immune response. The sequence is that of Protein Turandot A2 (TotA2) from Drosophila simulans (Fruit fly).